The following is a 272-amino-acid chain: 2-succinyl-6-hydroxy-2,4-cyclohexadiene-1-carboxylate synthase (272 aa).

Belongs to the AB hydrolase superfamily. MenH family. In terms of assembly, monomer.

It carries out the reaction 5-enolpyruvoyl-6-hydroxy-2-succinyl-cyclohex-3-ene-1-carboxylate = (1R,6R)-6-hydroxy-2-succinyl-cyclohexa-2,4-diene-1-carboxylate + pyruvate. It participates in quinol/quinone metabolism; 1,4-dihydroxy-2-naphthoate biosynthesis; 1,4-dihydroxy-2-naphthoate from chorismate: step 3/7. The protein operates within quinol/quinone metabolism; menaquinone biosynthesis. Functionally, catalyzes a proton abstraction reaction that results in 2,5-elimination of pyruvate from 2-succinyl-5-enolpyruvyl-6-hydroxy-3-cyclohexene-1-carboxylate (SEPHCHC) and the formation of 2-succinyl-6-hydroxy-2,4-cyclohexadiene-1-carboxylate (SHCHC). The polypeptide is 2-succinyl-6-hydroxy-2,4-cyclohexadiene-1-carboxylate synthase (Yersinia pseudotuberculosis serotype IB (strain PB1/+)).